Consider the following 354-residue polypeptide: Adenine deaminase (354 aa).

Positions 20, 22, and 200 each coordinate Zn(2+). E203 (proton donor) is an active-site residue. D281 lines the Zn(2+) pocket. A substrate-binding site is contributed by D282.

Belongs to the metallo-dependent hydrolases superfamily. Adenosine and AMP deaminases family. Adenine deaminase type 2 subfamily. It depends on Zn(2+) as a cofactor.

The catalysed reaction is adenine + H2O + H(+) = hypoxanthine + NH4(+). Its function is as follows. Catalyzes the hydrolytic deamination of adenine to hypoxanthine. Plays an important role in the purine salvage pathway and in nitrogen catabolism. This Cupriavidus metallidurans (strain ATCC 43123 / DSM 2839 / NBRC 102507 / CH34) (Ralstonia metallidurans) protein is Adenine deaminase.